The sequence spans 680 residues: Potassium-transporting ATPase ATP-binding subunit (680 aa).

The next 4 membrane-spanning stretches (helical) occupy residues 37-57 (VIFVTEAMAALVTLFFVLDVA), 69-89 (IAAWLWFTVLFATFAEAVAEG), 223-243 (ILLSGLTLIFLIAVVTLWGLA), and 257-277 (ALLVTLIPTTIGGLLSAIGIA). Catalysis depends on Asp-307, which acts as the 4-aspartylphosphate intermediate. ATP is bound by residues Asp-344, Glu-348, 375-382 (FTAETRLS), and Lys-393. Mg(2+)-binding residues include Asp-516 and Asp-520. 3 consecutive transmembrane segments (helical) span residues 586–606 (FAIIPALFVTTYPALGVLNIM), 614–634 (AILSAVIFNALIIVALIPLAL), and 652–672 (LLVYGLGGLVLPFAGIKLIDL).

Belongs to the cation transport ATPase (P-type) (TC 3.A.3) family. Type IA subfamily. The system is composed of three essential subunits: KdpA, KdpB and KdpC.

It localises to the cell inner membrane. The catalysed reaction is K(+)(out) + ATP + H2O = K(+)(in) + ADP + phosphate + H(+). Functionally, part of the high-affinity ATP-driven potassium transport (or Kdp) system, which catalyzes the hydrolysis of ATP coupled with the electrogenic transport of potassium into the cytoplasm. This subunit is responsible for energy coupling to the transport system and for the release of the potassium ions to the cytoplasm. In Rhizobium meliloti (strain 1021) (Ensifer meliloti), this protein is Potassium-transporting ATPase ATP-binding subunit.